The chain runs to 476 residues: Ribulose bisphosphate carboxylase large chain (476 aa).

Residues 1–2 constitute a propeptide that is removed on maturation; sequence MS. Pro-3 is subject to N-acetylproline. Lys-14 carries the post-translational modification N6,N6,N6-trimethyllysine. Substrate contacts are provided by Asn-123 and Thr-173. The active-site Proton acceptor is Lys-175. Lys-177 serves as a coordination point for substrate. Mg(2+) is bound by residues Lys-201, Asp-203, and Glu-204. Position 201 is an N6-carboxylysine (Lys-201). Catalysis depends on His-294, which acts as the Proton acceptor. Residues Arg-295, His-327, and Ser-379 each coordinate substrate.

Belongs to the RuBisCO large chain family. Type I subfamily. As to quaternary structure, heterohexadecamer of 8 large chains and 8 small chains; disulfide-linked. The disulfide link is formed within the large subunit homodimers. Requires Mg(2+) as cofactor. In terms of processing, the disulfide bond which can form in the large chain dimeric partners within the hexadecamer appears to be associated with oxidative stress and protein turnover.

The protein resides in the plastid. It localises to the chloroplast. The enzyme catalyses 2 (2R)-3-phosphoglycerate + 2 H(+) = D-ribulose 1,5-bisphosphate + CO2 + H2O. The catalysed reaction is D-ribulose 1,5-bisphosphate + O2 = 2-phosphoglycolate + (2R)-3-phosphoglycerate + 2 H(+). In terms of biological role, ruBisCO catalyzes two reactions: the carboxylation of D-ribulose 1,5-bisphosphate, the primary event in carbon dioxide fixation, as well as the oxidative fragmentation of the pentose substrate in the photorespiration process. Both reactions occur simultaneously and in competition at the same active site. The polypeptide is Ribulose bisphosphate carboxylase large chain (Phaseolus vulgaris (Kidney bean)).